Reading from the N-terminus, the 185-residue chain is Elongation factor P (185 aa).

The protein belongs to the elongation factor P family.

Its subcellular location is the cytoplasm. Its pathway is protein biosynthesis; polypeptide chain elongation. In terms of biological role, involved in peptide bond synthesis. Stimulates efficient translation and peptide-bond synthesis on native or reconstituted 70S ribosomes in vitro. Probably functions indirectly by altering the affinity of the ribosome for aminoacyl-tRNA, thus increasing their reactivity as acceptors for peptidyl transferase. This is Elongation factor P from Burkholderia cenocepacia (strain HI2424).